The chain runs to 499 residues: MQMIDIRPPDPRHFISGSTGDWEVVIGMEVHAQIVSDSKLFSGASTKFGAEPNNHVSLIDAAMPGMLPVVNQECIRQAIRTGLGLKAQINLKSVFDRKNYFYPDLPQGYQISQFHYPIVGEGKVTISIGPDSNGQFEDVEIGIERLHLEQDAGKSIHDQHPTMSFVDLNRSGVALMEIVSKPDMRSSEEAKAYITKLRMILRYLGTCDGNMDEGSIRADVNVSVRRPGEPLGTRCEIKNVNSIRFIGQAIEYEARRQIAVLEDGGVIDPETRLFDAAKCETRSIRLKEEAHDYRYFPDPDLLPLEFDQAFVDALASELPELPDDIKARFINDMGLTVYDASILITEKEIADYFQKVARGRDGKMVANWVINDLLGALNKNNCKIEDTPVKPDQLGAIIDLIEEGIISGKIAKDLFEIIWHEGGDLRQIVEERGMKQVTDTGAIQSAVDEIMANNPDKVSQAKEKPALVGWFVGQVMKETGGKANPQTVNKLVKMKLEID.

The protein belongs to the GatB/GatE family. GatB subfamily. As to quaternary structure, heterotrimer of A, B and C subunits.

The catalysed reaction is L-glutamyl-tRNA(Gln) + L-glutamine + ATP + H2O = L-glutaminyl-tRNA(Gln) + L-glutamate + ADP + phosphate + H(+). The enzyme catalyses L-aspartyl-tRNA(Asn) + L-glutamine + ATP + H2O = L-asparaginyl-tRNA(Asn) + L-glutamate + ADP + phosphate + 2 H(+). In terms of biological role, allows the formation of correctly charged Asn-tRNA(Asn) or Gln-tRNA(Gln) through the transamidation of misacylated Asp-tRNA(Asn) or Glu-tRNA(Gln) in organisms which lack either or both of asparaginyl-tRNA or glutaminyl-tRNA synthetases. The reaction takes place in the presence of glutamine and ATP through an activated phospho-Asp-tRNA(Asn) or phospho-Glu-tRNA(Gln). The polypeptide is Aspartyl/glutamyl-tRNA(Asn/Gln) amidotransferase subunit B (Bartonella bacilliformis (strain ATCC 35685 / KC583 / Herrer 020/F12,63)).